The following is a 185-amino-acid chain: Transcriptional repressor NrdR (185 aa).

The disordered stretch occupies residues 1 to 24 (MRCPFCGGPDTQVKDSRPSEDSSA). Residues 3 to 34 (CPFCGGPDTQVKDSRPSEDSSAIRRRRVCPDC) fold into a zinc finger. A compositionally biased stretch (basic and acidic residues) spans 12 to 24 (QVKDSRPSEDSSA). Residues 49 to 139 (LVVLKRSGKR…VYKNFREAQD (91 aa)) enclose the ATP-cone domain. Residues 149-185 (ERLEGEGDLPEDGEAAPAPPDEVVAAPRRGRPARKRA) form a disordered region. Over residues 176 to 185 (RRGRPARKRA) the composition is skewed to basic residues.

This sequence belongs to the NrdR family. Zn(2+) is required as a cofactor.

Its function is as follows. Negatively regulates transcription of bacterial ribonucleotide reductase nrd genes and operons by binding to NrdR-boxes. The polypeptide is Transcriptional repressor NrdR (Methylorubrum extorquens (strain PA1) (Methylobacterium extorquens)).